The sequence spans 180 residues: Glycodelin (180 aa).

The first 18 residues, 1–18, serve as a signal peptide directing secretion; sequence MLCLLLTLGVALVCGVPA. Residues Asn46 and Asn81 are each glycosylated (N-linked (GlcNAc...) (complex) asparagine). 2 disulfide bridges follow: Cys84/Cys178 and Cys124/Cys137.

It belongs to the calycin superfamily. Lipocalin family. Homodimer. Post-translationally, four distinct glycoforms A, C, F and S arise from different N-linked oligosaccharide chains at amino acid residues Asn-46 and Asn-81. Glycodelin-A and -F are taken up by the cumulus cells in which partial deglycosylation takes place to produce glycodelin-C. This protein is, the main protein synthesized and secreted in the endometrium from mid-luteal phase of the menstrual cycle and during the first semester of pregnancy. Glycodelin-A is expressed in amniotic fluid, endometrium/decidua and maternal serum (at protein level). Glycodelin-F is expressed in follicular fluid, luteinized granulosa cells and the oviduct (at protein level). Glycodelin-S is expressed in seminal plasma and seminal vesicles (at protein level). Glycodelin-C is detected in cumulus cells (at protein level), but cumulus cells do not synthesize Glycodelin-C but take up and convert glycodelin-A and -F vis glycan remodeling.

It is found in the secreted. Glycoprotein that regulates critical steps during fertilization and also has immunomonomodulatory effects. Four glycoforms, namely glycodelin-S, -A, -F and -C have been identified in reproductive tissues that differ in glycosylation and biological activity. Glycodelin-A has contraceptive and immunosuppressive activities. Glycodelin-C stimulates binding of spermatozoa to the zona pellucida. Glycodelin-F inhibits spermatozoa-zona pellucida binding and significantly suppresses progesterone-induced acrosome reaction of spermatozoa. Glycodelin-S in seminal plasma maintains the uncapacitated state of human spermatozoa. The chain is Glycodelin (PAEP) from Homo sapiens (Human).